The chain runs to 4388 residues: Intermembrane lipid transfer protein VPS13D (4388 aa).

A Chorein N-terminal domain is found at 2–115 (LEGLVAWVLN…ERERKKALLQ (114 aa)). Serine 663 is subject to Phosphoserine. The tract at residues 745–796 (QDNSRRKSRDGSASEETQFSDDEYKTPLATPPNTPPPESSSSNGEKTPPFSG) is disordered. The span at 747-756 (NSRRKSRDGS) shows a compositional bias: basic and acidic residues. A compositionally biased stretch (pro residues) spans 773-782 (ATPPNTPPPE). A phosphoserine mark is found at serine 1034, serine 1038, serine 1042, serine 1138, and serine 1341. The segment at 1563 to 1582 (ASATSSPCPDSPLPPLSTCG) is disordered. Residues serine 1598, serine 1603, and serine 1699 each carry the phosphoserine modification. Disordered stretches follow at residues 1741 to 1771 (RPTS…VDEP), 2070 to 2108 (QDKE…QFTM), and 2122 to 2145 (FVPS…ESSS). Threonine 1761 is subject to Phosphothreonine. At serine 1765 the chain carries Phosphoserine. Residues 2123–2144 (VPSTSTKQQGPQPTLSVGQESS) are compositionally biased toward polar residues. 5 positions are modified to phosphoserine: serine 2435, serine 2671, serine 2861, serine 2864, and serine 2983. A UBA domain is found at 2633 to 2676 (TLDPVLELQLARLQELGFSMDDCRKALLACQGQLKKAASWLFKN). In terms of domain architecture, SHR-BD spans 3276–3558 (LKIFISAPYW…LDYAWDEPTL (283 aa)). Position 3524 is an N6-acetyllysine (lysine 3524).

This sequence belongs to the VPS13 family. In terms of tissue distribution, widely expressed.

Its function is as follows. Mediates the transfer of lipids between membranes at organelle contact sites. Functions in promoting mitochondrial clearance by mitochondrial autophagy (mitophagy), also possibly by positively regulating mitochondrial fission. Mitophagy plays an important role in regulating cell health and mitochondrial size and homeostasis. The sequence is that of Intermembrane lipid transfer protein VPS13D from Homo sapiens (Human).